A 231-amino-acid polypeptide reads, in one-letter code: Proteasome subunit alpha type-2 (231 aa).

It belongs to the peptidase T1A family. In terms of assembly, the 26S proteasome consists of a 20S proteasome core and two 19S regulatory subunits. The 20S proteasome core is composed of 28 subunits that are arranged in four stacked rings, resulting in a barrel-shaped structure. The two end rings are each formed by seven alpha subunits, and the two central rings are each formed by seven beta subunits. The catalytic chamber with the active sites is on the inside of the barrel.

It localises to the cytoplasm. Its subcellular location is the nucleus. Functionally, the proteasome is a multicatalytic proteinase complex which is characterized by its ability to cleave peptides with Arg, Phe, Tyr, Leu, and Glu adjacent to the leaving group at neutral or slightly basic pH. The proteasome has an ATP-dependent proteolytic activity. This is Proteasome subunit alpha type-2 from Trypanosoma brucei brucei.